Here is a 199-residue protein sequence, read N- to C-terminus: UPF0301 protein Daci_1578 (199 aa).

The protein belongs to the UPF0301 (AlgH) family.

The sequence is that of UPF0301 protein Daci_1578 from Delftia acidovorans (strain DSM 14801 / SPH-1).